We begin with the raw amino-acid sequence, 82 residues long: Small ribosomal subunit protein bS18 (82 aa).

Residues 1-24 (MKRTNMKKARMEQSRRPKKNPLKA) are disordered.

Belongs to the bacterial ribosomal protein bS18 family. Part of the 30S ribosomal subunit. Forms a tight heterodimer with protein bS6.

Its function is as follows. Binds as a heterodimer with protein bS6 to the central domain of the 16S rRNA, where it helps stabilize the platform of the 30S subunit. This Corynebacterium jeikeium (strain K411) protein is Small ribosomal subunit protein bS18.